Reading from the N-terminus, the 164-residue chain is R-phycoerythrin alpha chain (164 aa).

(2R,3E)-phycoerythrobilin-binding residues include Cys82 and Cys139.

It belongs to the phycobiliprotein family. As to quaternary structure, heterodimer of an alpha and a beta chain. In terms of processing, contains two covalently linked bilin chromophores.

It localises to the plastid. It is found in the chloroplast thylakoid membrane. Its function is as follows. Light-harvesting photosynthetic bile pigment-protein from the phycobiliprotein complex. The protein is R-phycoerythrin alpha chain (cpeA) of Pyropia tenera (Nori).